A 323-amino-acid chain; its full sequence is Peroxisome biogenesis protein 20 (323 aa).

Residue C8 forms a Glycyl cysteine thioester (Cys-Gly) (interchain with G-Cter in ubiquitin) linkage. K19 is covalently cross-linked (Glycyl lysine isopeptide (Lys-Gly) (interchain with G-Cter in ubiquitin)). 3 consecutive short sequence motifs (wxxxF/Y motif) follow at residues 89 to 93 (WSSEF), 102 to 105 (WVED), and 141 to 145 (WTQEF).

It belongs to the peroxisomal targeting signal receptor family. Interacts (via WxxxF/Y and LVxEF motifs) with PEX14; promoting translocation through the PEX13-PEX14 docking complex. Interacts with PEX7. Post-translationally, monoubiquitinated at Cys-8 by PEX2 during PEX20 passage through the PEX2-PEX10-PEX12 retrotranslocation channel: monoubiquitination acts as a signal for PEX20 extraction and is required for proper export from peroxisomes and recycling. When PEX5 recycling is compromised, polyubiquitinated at Lys-19 by PEX10 during its passage through the retrotranslocation channel, leading to its degradation.

It is found in the cytoplasm. It localises to the cytosol. The protein localises to the peroxisome matrix. In terms of biological role, coreceptor required for the peroxisomal import of proteins containing a C-terminal PTS2-type peroxisomal targeting signal, such as 3-oxoacyl-CoA thiolase. Acts via its interaction with PEX7, promoting association between PEX7 bound to cargo proteins and the PEX13-PEX14 docking complex. PEX20 along with PEX7 and PTS2-containing cargo proteins are tranlocated into peroxisomes by passing through the PEX13-PEX14 docking complex. PEX20 coreceptor is then retrotranslocated into the cytosol, leading to release of bound cargo in the peroxisome matrix, and reset for a subsequent peroxisome import cycle. Also mediates peroxisomal import of proteins that do not contain PTS1- or PTS2-type peroxisomal targeting signals, such as acyl-CoA oxidases (Aox) izozymes. Import of acyl-CoA oxidases (Aox) izozymes is independent of PEX7. Required for PEX7 ubiquitination. The chain is Peroxisome biogenesis protein 20 from Komagataella pastoris (Yeast).